Here is a 211-residue protein sequence, read N- to C-terminus: MSVKAAEVSSLAERINWEKVDGLVPAIVQDFQSSQVLMMGYMNQDALAKTGETGQVTFFSRTKERLWTKGETSGNVLQLVNMSLDCDNDTLLVKVNPIGPTCHTGTTTCWDGDPQEESQMVWLHQLEQLLAARKSADPDSSYTASLYARGTKRISQKVGEEGVEVALAATSGDKAELVCESADLIYHLLVLLQDQGLSMNDVINKLKERHK.

A phosphoribosyl-AMP cyclohydrolase region spans residues 1–122; it reads MSVKAAEVSS…DPQEESQMVW (122 aa). Positions 123 to 211 are phosphoribosyl-ATP pyrophosphohydrolase; sequence LHQLEQLLAA…VINKLKERHK (89 aa).

The protein in the N-terminal section; belongs to the PRA-CH family. It in the C-terminal section; belongs to the PRA-PH family.

Its subcellular location is the cytoplasm. The catalysed reaction is 1-(5-phospho-beta-D-ribosyl)-ATP + H2O = 1-(5-phospho-beta-D-ribosyl)-5'-AMP + diphosphate + H(+). It catalyses the reaction 1-(5-phospho-beta-D-ribosyl)-5'-AMP + H2O = 1-(5-phospho-beta-D-ribosyl)-5-[(5-phospho-beta-D-ribosylamino)methylideneamino]imidazole-4-carboxamide. Its pathway is amino-acid biosynthesis; L-histidine biosynthesis; L-histidine from 5-phospho-alpha-D-ribose 1-diphosphate: step 2/9. The protein operates within amino-acid biosynthesis; L-histidine biosynthesis; L-histidine from 5-phospho-alpha-D-ribose 1-diphosphate: step 3/9. The polypeptide is Histidine biosynthesis bifunctional protein HisIE (Vibrio vulnificus (strain YJ016)).